Consider the following 596-residue polypeptide: Histone deacetylase 9 (596 aa).

2 stretches are compositionally biased toward basic and acidic residues: residues 132–153 (REKE…HRQE) and 160–172 (RSKD…AVAS). Disordered stretches follow at residues 132 to 172 (REKE…AVAS), 214 to 258 (HTSL…VRSR), 293 to 313 (SSVS…GPVA), and 522 to 596 (QPEG…QQVT). Residues 172–222 (STEVKQKLQEFILSKSATKEPLTNGTSHSMGRHPKLWYTAAHHTSLDQSSP) are interaction with mef2. Positions 221-237 (SPPPSGTSPTYKCPPPG) are enriched in pro residues. A compositionally biased stretch (low complexity) spans 293-312 (SSVSSSSPVSGPSSPNNGPV). Positions 522–536 (QPEGHLEEAEEDLHG) are enriched in basic and acidic residues. Positions 541 to 558 (QEKSSSIDNTRSYSSTDL) are enriched in polar residues. Basic and acidic residues predominate over residues 567–585 (KVKEEPPDSENEIKTHLQS). Positions 586 to 596 (EQKSVFAQQVT) are enriched in polar residues.

This sequence belongs to the histone deacetylase family. HD type 2 subfamily. Homodimer. Interacts with mef2. As to expression, broadly expressed.

It is found in the nucleus. It carries out the reaction N(6)-acetyl-L-lysyl-[histone] + H2O = L-lysyl-[histone] + acetate. Devoided of intrinsic deacetylase activity, promotes the deacetylation of lysine residues on the N-terminal part of the core histones (H2A, H2B, H3 and H4) by recruiting other histone deacetylases. Histone deacetylation gives a tag for epigenetic repression and plays an important role in transcriptional regulation, cell cycle progression and developmental events. Represses MEF2-dependent transcription. This chain is Histone deacetylase 9 (hdac9), found in Xenopus laevis (African clawed frog).